Reading from the N-terminus, the 458-residue chain is ATP synthase subunit beta (458 aa).

148-155 (GGAGVGKT) serves as a coordination point for ATP.

This sequence belongs to the ATPase alpha/beta chains family. In terms of assembly, F-type ATPases have 2 components, CF(1) - the catalytic core - and CF(0) - the membrane proton channel. CF(1) has five subunits: alpha(3), beta(3), gamma(1), delta(1), epsilon(1). CF(0) has three main subunits: a(1), b(2) and c(9-12). The alpha and beta chains form an alternating ring which encloses part of the gamma chain. CF(1) is attached to CF(0) by a central stalk formed by the gamma and epsilon chains, while a peripheral stalk is formed by the delta and b chains.

It is found in the cell inner membrane. It catalyses the reaction ATP + H2O + 4 H(+)(in) = ADP + phosphate + 5 H(+)(out). Its function is as follows. Produces ATP from ADP in the presence of a proton gradient across the membrane. The catalytic sites are hosted primarily by the beta subunits. The chain is ATP synthase subunit beta from Alkalilimnicola ehrlichii (strain ATCC BAA-1101 / DSM 17681 / MLHE-1).